We begin with the raw amino-acid sequence, 860 residues long: Semaphorin-3aa (860 aa).

Positions 1–17 are cleaved as a signal peptide; it reads MDYLVGIFLLLCGVALP. One can recognise a Sema domain in the interval 31–515; that stretch reads RLKLSYNEML…SDLGISQMPL (485 aa). Asparagine 53 carries N-linked (GlcNAc...) asparagine glycosylation. Cysteine 104 and cysteine 115 are oxidised to a cystine. Residue asparagine 126 is glycosylated (N-linked (GlcNAc...) asparagine). 4 disulfide bridges follow: cysteine 133–cysteine 142, cysteine 270–cysteine 382, cysteine 294–cysteine 342, and cysteine 518–cysteine 536. Residues 579-668 form the Ig-like C2-type domain; the sequence is GYSSVEERSV…FIQPLRRINL (90 aa). Asparagine 593 is a glycosylation site (N-linked (GlcNAc...) asparagine). Residues cysteine 652 and cysteine 717 are joined by a disulfide bond. The tract at residues 725–860 is disordered; it reads KKPKGKKAPK…HEQQRPPRSV (136 aa). 2 stretches are compositionally biased toward polar residues: residues 748–764 and 782–818; these read TPQTTAQSLQNPTQRAQ and TGLQRSQSPGGTVSTESQSTKPDTQKASESQRAQPNQ. Residues 838-860 are compositionally biased toward basic and acidic residues; the sequence is QLQENKRGRNRRTHEQQRPPRSV.

This sequence belongs to the semaphorin family.

It is found in the secreted. May influence outgrowth by a variety of growth cones including those of the posterior lateral line ganglion. The protein is Semaphorin-3aa (sema3aa) of Danio rerio (Zebrafish).